The primary structure comprises 134 residues: Small ribosomal subunit protein uS8c (134 aa).

It belongs to the universal ribosomal protein uS8 family. Part of the 30S ribosomal subunit.

Its subcellular location is the plastid. The protein resides in the chloroplast. In terms of biological role, one of the primary rRNA binding proteins, it binds directly to 16S rRNA central domain where it helps coordinate assembly of the platform of the 30S subunit. This chain is Small ribosomal subunit protein uS8c (rps8), found in Lotus japonicus (Lotus corniculatus var. japonicus).